Reading from the N-terminus, the 433-residue chain is Chaperone SurA (433 aa).

Positions 1 to 28 (MTAITRITLTGALLAAALLLAALQPARA) are cleaved as a signal peptide. PpiC domains follow at residues 174-277 (NQEY…KLMD) and 286-386 (VTET…QVTD).

It localises to the periplasm. The catalysed reaction is [protein]-peptidylproline (omega=180) = [protein]-peptidylproline (omega=0). Functionally, chaperone involved in the correct folding and assembly of outer membrane proteins. Recognizes specific patterns of aromatic residues and the orientation of their side chains, which are found more frequently in integral outer membrane proteins. May act in both early periplasmic and late outer membrane-associated steps of protein maturation. The sequence is that of Chaperone SurA from Alkalilimnicola ehrlichii (strain ATCC BAA-1101 / DSM 17681 / MLHE-1).